The following is a 310-amino-acid chain: MKALWAVLLATLLTGCLSEGEPEVTEQLSWQSDQPWEQALNRFWDYLRWVQTLSDQVQEELQNSQVTQELTVLMEDTMTEVKAYKKELEEQLGPVAEETRARLAKEVQAAQARLGADMEDLRNRLAQYRNEVHTMLGQSTEELRSRLSSHLRKMRKRLMRDAEDLQKRLAVYKAGAREGAERGVSAIRERLGPLVEQGRQRTANLGAGVAQPLRDRAQALGDRLRGRLEEVGNQARDRLEEMREHMEEVRSKMEEQTQQIRLQAEIFQARLKGWFEPLVEDMQRQLANLVEKIQASTNSVLSTSVPQENQ.

The first 18 residues, 1–18 (MKALWAVLLATLLTGCLS), serve as a signal peptide directing secretion. 8 consecutive repeat copies span residues 72 to 93 (VLME…EQLG), 94 to 115 (PVAE…ARLG), 116 to 137 (ADME…TMLG), 138 to 159 (QSTE…KRLM), 160 to 181 (RDAE…EGAE), 182 to 203 (RGVS…QRTA), 204 to 225 (NLGA…DRLR), and 226 to 247 (GRLE…EHME). An 8 X 22 AA approximate tandem repeats region spans residues 72 to 247 (VLMEDTMTEV…RLEEMREHME (176 aa)). The residue at position 135 (Met135) is a Methionine sulfoxide. Residues 150–160 (HLRKMRKRLMR) form an LDL and other lipoprotein receptors binding region. The segment at 150–160 (HLRKMRKRLMR) is LDL receptor binding. 154 to 157 (MRKR) lines the heparin pocket. The lipid-binding and lipoprotein association stretch occupies residues 202–282 (TANLGAGVAQ…GWFEPLVEDM (81 aa)). Residue 221-228 (GDRLRGRL) coordinates heparin. Positions 258 to 310 (QQIRLQAEIFQARLKGWFEPLVEDMQRQLANLVEKIQASTNSVLSTSVPQENQ) are homooligomerization. Residues 270–282 (RLKGWFEPLVEDM) are specificity for association with VLDL.

It belongs to the apolipoprotein A1/A4/E family. Homotetramer. May interact with ABCA1; functionally associated with ABCA1 in the biogenesis of HDLs. May interact with APP/A4 amyloid-beta peptide; the interaction is extremely stable in vitro but its physiological significance is unclear. May interact with MAPT. May interact with MAP2. In the cerebrospinal fluid, interacts with secreted SORL1. Interacts with PMEL; this allows the loading of PMEL luminal fragment on ILVs to induce fibril nucleation. APOE exists as multiple glycosylated and sialylated glycoforms within cells and in plasma. The extent of glycosylation and sialylation are tissue and context specific. Post-translationally, glycated in plasma VLDL. In terms of processing, phosphorylated by FAM20C in the extracellular medium.

The protein localises to the secreted. It localises to the extracellular space. The protein resides in the extracellular matrix. It is found in the extracellular vesicle. Its subcellular location is the endosome. The protein localises to the multivesicular body. In terms of biological role, APOE is an apolipoprotein, a protein associating with lipid particles, that mainly functions in lipoprotein-mediated lipid transport between organs via the plasma and interstitial fluids. APOE is a core component of plasma lipoproteins and is involved in their production, conversion and clearance. Apolipoproteins are amphipathic molecules that interact both with lipids of the lipoprotein particle core and the aqueous environment of the plasma. As such, APOE associates with chylomicrons, chylomicron remnants, very low density lipoproteins (VLDL) and intermediate density lipoproteins (IDL) but shows a preferential binding to high-density lipoproteins (HDL). It also binds a wide range of cellular receptors including the LDL receptor/LDLR, the LDL receptor-related proteins LRP1, LRP2 and LRP8 and the very low-density lipoprotein receptor/VLDLR that mediate the cellular uptake of the APOE-containing lipoprotein particles. Finally, APOE also has a heparin-binding activity and binds heparan-sulfate proteoglycans on the surface of cells, a property that supports the capture and the receptor-mediated uptake of APOE-containing lipoproteins by cells. A main function of APOE is to mediate lipoprotein clearance through the uptake of chylomicrons, VLDLs, and HDLs by hepatocytes. APOE is also involved in the biosynthesis by the liver of VLDLs as well as their uptake by peripheral tissues ensuring the delivery of triglycerides and energy storage in muscle, heart and adipose tissues. By participating in the lipoprotein-mediated distribution of lipids among tissues, APOE plays a critical role in plasma and tissues lipid homeostasis. APOE is also involved in two steps of reverse cholesterol transport, the HDLs-mediated transport of cholesterol from peripheral tissues to the liver, and thereby plays an important role in cholesterol homeostasis. First, it is functionally associated with ABCA1 in the biogenesis of HDLs in tissues. Second, it is enriched in circulating HDLs and mediates their uptake by hepatocytes. APOE also plays an important role in lipid transport in the central nervous system, regulating neuron survival and sprouting. The sequence is that of Apolipoprotein E (Apoe) from Grammomys surdaster (African woodland thicket rat).